The sequence spans 878 residues: Probable outer membrane protein PmpI (878 aa).

The signal sequence occupies residues Met-1–Gly-24. Residues Ser-360–Gln-371 show a composition bias toward low complexity. The tract at residues Ser-360–Thr-381 is disordered. Polar residues predominate over residues Ala-372–Thr-381. One can recognise an Autotransporter domain in the interval Gly-602–Phe-878.

This sequence belongs to the PMP outer membrane protein family.

The protein resides in the secreted. It is found in the cell wall. It localises to the cell outer membrane. This chain is Probable outer membrane protein PmpI (pmpI), found in Chlamydia trachomatis serovar D (strain ATCC VR-885 / DSM 19411 / UW-3/Cx).